The chain runs to 433 residues: Glutamate-1-semialdehyde 2,1-aminomutase (433 aa).

The residue at position 272 (K272) is an N6-(pyridoxal phosphate)lysine.

It belongs to the class-III pyridoxal-phosphate-dependent aminotransferase family. HemL subfamily. In terms of assembly, homodimer. The cofactor is pyridoxal 5'-phosphate.

The protein resides in the cytoplasm. It catalyses the reaction (S)-4-amino-5-oxopentanoate = 5-aminolevulinate. Its pathway is porphyrin-containing compound metabolism; protoporphyrin-IX biosynthesis; 5-aminolevulinate from L-glutamyl-tRNA(Glu): step 2/2. This is Glutamate-1-semialdehyde 2,1-aminomutase from Methylacidiphilum infernorum (isolate V4) (Methylokorus infernorum (strain V4)).